We begin with the raw amino-acid sequence, 92 residues long: Small ribosomal subunit protein uS19 (92 aa).

The protein belongs to the universal ribosomal protein uS19 family.

In terms of biological role, protein S19 forms a complex with S13 that binds strongly to the 16S ribosomal RNA. The sequence is that of Small ribosomal subunit protein uS19 from Gloeobacter violaceus (strain ATCC 29082 / PCC 7421).